Here is an 81-residue protein sequence, read N- to C-terminus: uncharacterized protein (81 aa).

This is an uncharacterized protein from Schizosaccharomyces pombe (strain 972 / ATCC 24843) (Fission yeast).